A 199-amino-acid chain; its full sequence is Cilia- and flagella-associated protein 20 (199 aa).

This sequence belongs to the CFAP20 family. In terms of tissue distribution, expressed in spermatocytes and chordotonal organs in sensory neurons of the antenna.

Its subcellular location is the nucleus. The protein localises to the nucleolus. The protein resides in the cell projection. It is found in the cilium. It localises to the cytoplasm. Its subcellular location is the cytoskeleton. The protein localises to the microtubule organizing center. The protein resides in the centrosome. It is found in the centriole. It localises to the flagellum. Its subcellular location is the cilium axoneme. Cilium- and flagellum-specific protein that plays a role in axonemal structure organization and motility. Microtubule inner protein (MIP) part of the dynein-decorated doublet microtubules (DMTs) in cilia axoneme, which is required for motile cilia beating. Involved in the regulation of the size and morphology of cilia. Required for sperm individualization, differentiation of the sperm flagellum and tubulin polyglycylation of axonemal microtubules. The sequence is that of Cilia- and flagella-associated protein 20 from Drosophila melanogaster (Fruit fly).